The primary structure comprises 2542 residues: Unconventional myosin-IXa (2542 aa).

Positions 14–112 (NEHTLRIYPG…YRFLLREKNL (99 aa)) constitute a Ras-associating domain. The Myosin motor domain maps to 146–1017 (KDFDDLCSLP…ERQHLQDLLH (872 aa)). A helical transmembrane segment spans residues 175-195 (IYTYVGSILIAINPFKFLPIY). 239–246 (GESGSGKT) serves as a coordination point for ATP. Phosphoserine is present on S755. The segment at 908–919 (QAEPYFVKCIRS) is actin-binding. IQ domains are found at residues 1021–1041 (LRRIVLLQRWFRVLLSRQQFL), 1043–1072 (LRQASIIIQRFWRNYLNQKQVRNAAVEKDA), 1075–1104 (MASAASLLQASWRAHLERQRYLELRAAAVI), 1116–1145 (RHKAATCIQSRWRGYRQRKKYKEQRNKIIL), and 1139–1168 (QRNKIILLQSIYRGFRARQRCNALKEEKLR). The tract at residues 1022 to 1163 (RRIVLLQRWF…RARQRCNALK (142 aa)) is neck or regulatory domain. The segment at 1164–2505 (EEKLREAKLE…LKNVKNSPQK (1342 aa)) is tail. Positions 1221-1240 (RESSMDFSKESPDKQQERGR) are enriched in basic and acidic residues. A disordered region spans residues 1221-1276 (RESSMDFSKESPDKQQERGRRQSGTDLQEDVIVRQRPKSLEDLHQKKVGRAKRESR). At S1243 the chain carries Phosphoserine. Phosphothreonine is present on T1245. Position 1259 is a phosphoserine (S1259). The stretch at 1265–1292 (QKKVGRAKRESRRMRELEQAIFSLELLK) forms a coiled coil. The span at 1266-1276 (KKVGRAKRESR) shows a compositional bias: basic residues. Residues S1300 and S1318 each carry the phosphoserine modification. Residues 1342 to 1401 (KSKPESLILDEGELKISSPNTFTNPKSQDNALSASSETSSTLAGKGASSDSEHLKNGTAK) are disordered. A compositionally biased stretch (polar residues) spans 1358–1371 (SSPNTFTNPKSQDN). The span at 1372-1384 (ALSASSETSSTLA) shows a compositional bias: low complexity. Basic and acidic residues predominate over residues 1391-1401 (DSEHLKNGTAK). Residues 1492–1539 (TVLKKLEKLNIEKEKRQKQLQQQNEKEMMEQIRQQTDILEKERKAFKT) adopt a coiled-coil conformation. 4 disordered regions span residues 1650–1675 (RSTERDHFKSTHFYSHRSDDPSREGS), 1693–1727 (SGNPQAHKQDESAWKPKLAGPGQQETSQRFSSVDE), 1767–1793 (GKQGEKKTTRVKPASQSEISSFFPGPD), and 1806–1841 (QYHPTPPLSPELPGSCRKEFKENKEPSPKAKRKRGV). Over residues 1665-1675 (HRSDDPSREGS) the composition is skewed to basic and acidic residues. The segment covering 1715–1726 (QQETSQRFSSVD) has biased composition (polar residues). The segment covering 1821–1833 (CRKEFKENKEPSP) has biased composition (basic and acidic residues). S1950 carries the phosphoserine modification. Phorbol-ester/DAG-type zinc fingers lie at residues 2001–2050 (GHIF…TAKC) and 2068–2119 (SRLT…DTDA). The Rho-GAP domain maps to 2065–2253 (VELSRLTSED…LIVVEQMNKY (189 aa)). Residues S2293 and S2296 each carry the phosphoserine modification. A coiled-coil region spans residues 2324 to 2360 (TDQQQAAMQQEEKVLTEQIENLQKEKEELTFEMLVLE). The interval 2361–2443 (PRASDDETLE…NTTSSHGTRK (83 aa)) is disordered. Over residues 2377-2386 (TADSSENLNM) the composition is skewed to polar residues. Over residues 2420 to 2438 (SLDSVSSSVSSCLSNTTSS) the composition is skewed to low complexity. Position 2458 is a phosphoserine (S2458). Positions 2465-2530 (TEGPLGQAKS…TVDSDCSSTQ (66 aa)) are disordered.

This sequence belongs to the TRAFAC class myosin-kinesin ATPase superfamily. Myosin family. Phosphorylated by ALPK1 following monosodium urate monohydrate (MSU)-induced inflammation. As to expression, expressed in the eye, lung, liver, brain, heart, kidney, skeletal muscle and spleen. No detection was found in liver. In the brain, expressed in the ependymal cells of the third ventricle and the aqueduct.

Its subcellular location is the membrane. It localises to the cytoplasm. The protein resides in the synapse. The protein localises to the cell projection. It is found in the growth cone. Its function is as follows. Myosins are actin-based motor molecules with ATPase activity. Unconventional myosins serve in intracellular movements. Regulates Rho by stimulating it's GTPase activity in neurons. Required for the regulation of neurite branching and motor neuron axon guidance. This Mus musculus (Mouse) protein is Unconventional myosin-IXa (Myo9a).